The sequence spans 73 residues: Small ribosomal subunit protein bS18 (73 aa).

The protein belongs to the bacterial ribosomal protein bS18 family. Part of the 30S ribosomal subunit. Forms a tight heterodimer with protein bS6.

In terms of biological role, binds as a heterodimer with protein bS6 to the central domain of the 16S rRNA, where it helps stabilize the platform of the 30S subunit. This is Small ribosomal subunit protein bS18 from Prochlorococcus marinus (strain MIT 9313).